We begin with the raw amino-acid sequence, 561 residues long: Probable oligo-1,6-glucosidase 2 (561 aa).

D199 acts as the Nucleophile in catalysis. Residue E255 is the Proton donor of the active site.

This sequence belongs to the glycosyl hydrolase 13 family.

The protein resides in the cytoplasm. The enzyme catalyses Hydrolysis of (1-&gt;6)-alpha-D-glucosidic linkages in some oligosaccharides produced from starch and glycogen by alpha-amylase, and in isomaltose.. This chain is Probable oligo-1,6-glucosidase 2 (ycdG), found in Bacillus subtilis (strain 168).